The primary structure comprises 197 residues: UPF0215 protein MK0057 (197 aa).

It belongs to the UPF0215 family.

The polypeptide is UPF0215 protein MK0057 (Methanopyrus kandleri (strain AV19 / DSM 6324 / JCM 9639 / NBRC 100938)).